We begin with the raw amino-acid sequence, 198 residues long: Probable GTP-binding protein EngB (198 aa).

An EngB-type G domain is found at 22–197 (TLPEYAFIGR…LDYIEGINNS (176 aa)). GTP-binding positions include 30-37 (GRSNVGKS), 57-61 (GKTQL), 75-78 (DLPG), 142-145 (TKAD), and 175-178 (ITSA). 2 residues coordinate Mg(2+): S37 and T59.

This sequence belongs to the TRAFAC class TrmE-Era-EngA-EngB-Septin-like GTPase superfamily. EngB GTPase family. It depends on Mg(2+) as a cofactor.

Necessary for normal cell division and for the maintenance of normal septation. This is Probable GTP-binding protein EngB from Christiangramia forsetii (strain DSM 17595 / CGMCC 1.15422 / KT0803) (Gramella forsetii).